We begin with the raw amino-acid sequence, 238 residues long: Peptidyl-tRNA hydrolase (238 aa).

Tyr-14 serves as a coordination point for tRNA. Catalysis depends on His-19, which acts as the Proton acceptor. TRNA contacts are provided by Tyr-64, Asn-66, and Asn-112. A disordered region spans residues Pro-202–Pro-225. Polar residues predominate over residues His-207–Gln-216.

The protein belongs to the PTH family. As to quaternary structure, monomer.

The protein resides in the cytoplasm. It carries out the reaction an N-acyl-L-alpha-aminoacyl-tRNA + H2O = an N-acyl-L-amino acid + a tRNA + H(+). In terms of biological role, hydrolyzes ribosome-free peptidyl-tRNAs (with 1 or more amino acids incorporated), which drop off the ribosome during protein synthesis, or as a result of ribosome stalling. Functionally, catalyzes the release of premature peptidyl moieties from peptidyl-tRNA molecules trapped in stalled 50S ribosomal subunits, and thus maintains levels of free tRNAs and 50S ribosomes. This is Peptidyl-tRNA hydrolase from Agrobacterium fabrum (strain C58 / ATCC 33970) (Agrobacterium tumefaciens (strain C58)).